The chain runs to 144 residues: Methylglyoxal synthase (144 aa).

One can recognise an MGS-like domain in the interval 1-144 (MKIALIAHDE…KSGEEKETER (144 aa)). Residues His8, Lys12, 34–37 (TGTT), and 54–55 (SG) each bind substrate. The Proton donor/acceptor role is filled by Asp60. A substrate-binding site is contributed by His87.

Belongs to the methylglyoxal synthase family.

The enzyme catalyses dihydroxyacetone phosphate = methylglyoxal + phosphate. Functionally, catalyzes the formation of methylglyoxal from dihydroxyacetone phosphate. This is Methylglyoxal synthase from Geobacillus thermodenitrificans (strain NG80-2).